The sequence spans 939 residues: Aconitate hydratase A (939 aa).

Residues 433–453 are disordered; it reads GSGESLATGAEGRPSKPVTVA. [4Fe-4S] cluster-binding residues include C475, C541, and C544.

It belongs to the aconitase/IPM isomerase family. Monomer. It depends on [4Fe-4S] cluster as a cofactor.

It catalyses the reaction citrate = D-threo-isocitrate. The enzyme catalyses (2S,3R)-3-hydroxybutane-1,2,3-tricarboxylate = 2-methyl-cis-aconitate + H2O. It functions in the pathway carbohydrate metabolism; tricarboxylic acid cycle; isocitrate from oxaloacetate: step 2/2. Its pathway is organic acid metabolism; propanoate degradation. Functionally, involved in the catabolism of short chain fatty acids (SCFA) via the tricarboxylic acid (TCA)(acetyl degradation route) and probably via the 2-methylcitrate cycle I (propionate degradation route). Catalyzes the reversible isomerization of citrate to isocitrate via cis-aconitate. Could catalyze the hydration of 2-methyl-cis-aconitate to yield (2R,3S)-2-methylisocitrate. The apo form of AcnA functions as a RNA-binding regulatory protein. This Corynebacterium glutamicum (strain ATCC 13032 / DSM 20300 / JCM 1318 / BCRC 11384 / CCUG 27702 / LMG 3730 / NBRC 12168 / NCIMB 10025 / NRRL B-2784 / 534) protein is Aconitate hydratase A (acn).